The chain runs to 410 residues: Class E basic helix-loop-helix protein 41 (410 aa).

A Glycyl lysine isopeptide (Lys-Gly) (interchain with G-Cter in SUMO2) cross-link involves residue lysine 31. The region spanning 44–99 is the bHLH domain; sequence TYKLPHRLIEKKRRDRINECIAQLKDLLPEHLKLTTLGHLEKAVVLELTLKHLKAL. Lysine 121 participates in a covalent cross-link: Glycyl lysine isopeptide (Lys-Gly) (interchain with G-Cter in SUMO2). Residues 131–166 form the Orange domain; sequence FHSGFQTCAKEVLQYLARFESWTPREPRCAQLVSHL. 2 disordered regions span residues 209–251 and 371–410; these read IQRT…SAAP and EVAP…KDAP. A Glycyl lysine isopeptide (Lys-Gly) (interchain with G-Cter in SUMO2) cross-link involves residue lysine 240.

In terms of assembly, homodimer. Heterodimer with BHLHE40/DEC1. Interacts with CIART. Interacts with BMAL1 and RXRA. Interacts with NR0B2 and HNF1A. As to expression, highly expressed in the caudate putamen, pineal gland, granular cell layer of the cerebellum, olfactory bulb, piriform cortex, hippocampus and hypothalamic nuclei. Moderately expressed in skeletal muscle, heart. Weakly expressed in lung.

The protein resides in the nucleus. Transcriptional repressor involved in the regulation of the circadian rhythm by negatively regulating the activity of the clock genes and clock-controlled genes. Acts as the negative limb of a novel autoregulatory feedback loop (DEC loop) which differs from the one formed by the PER and CRY transcriptional repressors (PER/CRY loop). Both these loops are interlocked as it represses the expression of PER1 and in turn is repressed by PER1/2 and CRY1/2. Represses the activity of the circadian transcriptional activator: CLOCK-BMAL1 heterodimer by competing for the binding to E-box elements (5'-CACGTG-3') found within the promoters of its target genes. Negatively regulates its own expression and the expression of DBP and BHLHE41/DEC2. Acts as a corepressor of RXR and the RXR-LXR heterodimers and represses the ligand-induced RXRA/B/G, NR1H3/LXRA, NR1H4 and VDR transactivation activity. Inhibits HNF1A-mediated transactivation of CYP1A2, CYP2E1 and CYP3A11. The polypeptide is Class E basic helix-loop-helix protein 41 (Bhlhb3) (Rattus norvegicus (Rat)).